The chain runs to 212 residues: tRNA (guanine-N(7)-)-methyltransferase (212 aa).

S-adenosyl-L-methionine-binding residues include Glu-44, Glu-69, Asp-96, and Asp-118. Asp-118 is a catalytic residue. Lys-122 contributes to the substrate binding site. Residues 124 to 129 (RHEKRR) are interaction with RNA. Residues Asp-154 and 192-195 (TEYE) each bind substrate.

This sequence belongs to the class I-like SAM-binding methyltransferase superfamily. TrmB family.

The catalysed reaction is guanosine(46) in tRNA + S-adenosyl-L-methionine = N(7)-methylguanosine(46) in tRNA + S-adenosyl-L-homocysteine. The protein operates within tRNA modification; N(7)-methylguanine-tRNA biosynthesis. Its function is as follows. Catalyzes the formation of N(7)-methylguanine at position 46 (m7G46) in tRNA. This Pediococcus pentosaceus (strain ATCC 25745 / CCUG 21536 / LMG 10740 / 183-1w) protein is tRNA (guanine-N(7)-)-methyltransferase.